Reading from the N-terminus, the 310-residue chain is MSKIIFMGTPDFSAPILKALHEAHGVSLVITQPDKPVGRKRVLTPPPVKVMAESLGIEVYQPESMKSDEAFERVHALSPDLIVTAAFGQILPERVLDIPRLGCINVHASLLPKYRGGAPIHKAIINGEKYSGVTIMYMVKRLDAGDMIDSVQVPIEINDTVGTLHDKLSVAGTDLLLEVMPSVLSGTNNRTPQNDSEATFASNVSREEEYVTFDRTALEVHNHIRGLSPWPVAFANFDGKAMKLWASEIAEGSGAPGEIIQADKAGLVIATNDGAVRITSLQPAGKKRMDAASFVAGAKSQLVGMKFNEA.

109 to 112 (SLLP) is a (6S)-5,6,7,8-tetrahydrofolate binding site.

This sequence belongs to the Fmt family.

The catalysed reaction is L-methionyl-tRNA(fMet) + (6R)-10-formyltetrahydrofolate = N-formyl-L-methionyl-tRNA(fMet) + (6S)-5,6,7,8-tetrahydrofolate + H(+). Functionally, attaches a formyl group to the free amino group of methionyl-tRNA(fMet). The formyl group appears to play a dual role in the initiator identity of N-formylmethionyl-tRNA by promoting its recognition by IF2 and preventing the misappropriation of this tRNA by the elongation apparatus. The polypeptide is Methionyl-tRNA formyltransferase (Macrococcus caseolyticus (strain JCSC5402) (Macrococcoides caseolyticum)).